A 274-amino-acid polypeptide reads, in one-letter code: Peroxiredoxin-4 (274 aa).

Positions 1–40 (MEAPPPPPPLPATTLAPGRSRKLLLLPLLLFLLRAEAVRG) are cleaved as a signal peptide. The Thioredoxin domain occupies 82–240 (AKISKPAPYW…TLRLVQAFQY (159 aa)). C127 serves as the catalytic Cysteine sulfenic acid (-SOH) intermediate.

Belongs to the peroxiredoxin family. AhpC/Prx1 subfamily. In terms of assembly, homodimer; disulfide-linked, upon oxidation. 5 homodimers assemble to form a ring-like decamer. In terms of processing, the enzyme can be inactivated by further oxidation of the cysteine sulfenic acid (C(P)-SOH) to sulphinic acid (C(P)-SO2H) and sulphonic acid (C(P)-SO3H) instead of its condensation to a disulfide bond.

It localises to the cytoplasm. Its subcellular location is the endoplasmic reticulum. The catalysed reaction is a hydroperoxide + [thioredoxin]-dithiol = an alcohol + [thioredoxin]-disulfide + H2O. Its function is as follows. Thiol-specific peroxidase that catalyzes the reduction of hydrogen peroxide and organic hydroperoxides to water and alcohols, respectively. Plays a role in cell protection against oxidative stress by detoxifying peroxides and as sensor of hydrogen peroxide-mediated signaling events. Regulates the activation of NF-kappa-B in the cytosol by a modulation of I-kappa-B-alpha phosphorylation. This chain is Peroxiredoxin-4 (PRDX4), found in Bos taurus (Bovine).